Reading from the N-terminus, the 217-residue chain is Cyclin-P2-1 (217 aa).

Belongs to the cyclin family. Cyclin U/P subfamily.

This Oryza sativa subsp. japonica (Rice) protein is Cyclin-P2-1 (CYCP2-1).